The primary structure comprises 130 residues: kinetoplast-associated protein 2-1 (130 aa).

The propeptide occupies 1-10; the sequence is MLRRTVSNFA. The tract at residues 89–130 is disordered; the sequence is LTKKWNETKQAQREKAQKAQKKTKSAKSKVKKAAKKSKKSKK. Basic and acidic residues predominate over residues 92–105; that stretch reads KWNETKQAQREKAQ. Basic residues predominate over residues 106 to 130; it reads KAQKKTKSAKSKVKKAAKKSKKSKK.

This sequence belongs to the KAP family. Associates with the kinetoplast DNA network.

It localises to the mitochondrion matrix. The protein resides in the kinetoplast. Functionally, histone H1-like DNA-binding protein involved in the organization and segregation of kinetoplast DNA (kDNA). The mitochondrial DNA of kinetoplastid protozoa consists of about 5,000 minicircles and 20 to 30 maxicircles. These circular DNAs are held together by catenation into a highly organized compact disk structure referred to as a kinetoplast DNA (kDNA) network. Binds preferentially to a specific fragment of minicircle DNA and is able to compact kDNA networks through DNA charge neutralization and condensation. This chain is kinetoplast-associated protein 2-1 (KAP2-1), found in Crithidia fasciculata.